We begin with the raw amino-acid sequence, 291 residues long: Homoserine kinase (291 aa).

Residue 80 to 90 (RPASGLGSSAA) coordinates ATP.

The protein belongs to the GHMP kinase family. Homoserine kinase subfamily.

The protein resides in the cytoplasm. The catalysed reaction is L-homoserine + ATP = O-phospho-L-homoserine + ADP + H(+). Its pathway is amino-acid biosynthesis; L-threonine biosynthesis; L-threonine from L-aspartate: step 4/5. In terms of biological role, catalyzes the ATP-dependent phosphorylation of L-homoserine to L-homoserine phosphate. In Haloarcula marismortui (strain ATCC 43049 / DSM 3752 / JCM 8966 / VKM B-1809) (Halobacterium marismortui), this protein is Homoserine kinase.